The primary structure comprises 486 residues: Cobyric acid synthase (486 aa).

The 188-residue stretch at 248–435 (VLNVVVPVLP…LHGLFESPAA (188 aa)) folds into the GATase cobBQ-type domain. Residue cysteine 329 is the Nucleophile of the active site. Histidine 427 is a catalytic residue.

It belongs to the CobB/CobQ family. CobQ subfamily.

Its pathway is cofactor biosynthesis; adenosylcobalamin biosynthesis. Functionally, catalyzes amidations at positions B, D, E, and G on adenosylcobyrinic A,C-diamide. NH(2) groups are provided by glutamine, and one molecule of ATP is hydrogenolyzed for each amidation. The polypeptide is Cobyric acid synthase (Pseudomonas syringae pv. tomato (strain ATCC BAA-871 / DC3000)).